A 384-amino-acid polypeptide reads, in one-letter code: Cysteine desulfurase (384 aa).

Residues 74–75 (GT), Asn154, Gln180, and 200–202 (SGH) each bind pyridoxal 5'-phosphate. Lys203 carries the post-translational modification N6-(pyridoxal phosphate)lysine. Thr238 contributes to the pyridoxal 5'-phosphate binding site. The active-site Cysteine persulfide intermediate is the Cys325. Cys325 contributes to the [2Fe-2S] cluster binding site.

The protein belongs to the class-V pyridoxal-phosphate-dependent aminotransferase family. NifS/IscS subfamily. In terms of assembly, homodimer. Pyridoxal 5'-phosphate serves as cofactor.

It carries out the reaction (sulfur carrier)-H + L-cysteine = (sulfur carrier)-SH + L-alanine. Functionally, catalyzes the removal of elemental sulfur atoms from cysteine to produce alanine. Seems to participate in the biosynthesis of the nitrogenase metalloclusters by providing the inorganic sulfur required for the Fe-S core formation. The protein is Cysteine desulfurase of Rhodobacter capsulatus (Rhodopseudomonas capsulata).